The sequence spans 161 residues: Transcription antitermination protein NusB (161 aa).

This sequence belongs to the NusB family.

Its function is as follows. Involved in transcription antitermination. Required for transcription of ribosomal RNA (rRNA) genes. Binds specifically to the boxA antiterminator sequence of the ribosomal RNA (rrn) operons. In Nitrobacter winogradskyi (strain ATCC 25391 / DSM 10237 / CIP 104748 / NCIMB 11846 / Nb-255), this protein is Transcription antitermination protein NusB.